The primary structure comprises 652 residues: O-fucosyltransferase 15 (652 aa).

A helical; Signal-anchor for type II membrane protein membrane pass occupies residues 91–111 (TAAFVIVLVGFFIFVNWFMLS). Residues asparagine 139, asparagine 169, and asparagine 251 are each glycosylated (N-linked (GlcNAc...) asparagine). 426–428 (HLR) contributes to the substrate binding site. 3 N-linked (GlcNAc...) asparagine glycosylation sites follow: asparagine 464, asparagine 546, and asparagine 607.

Belongs to the glycosyltransferase GT106 family.

The protein localises to the membrane. Its pathway is glycan metabolism. The polypeptide is O-fucosyltransferase 15 (Arabidopsis thaliana (Mouse-ear cress)).